The sequence spans 596 residues: Elongation factor 4 (596 aa).

The region spanning 2-184 is the tr-type G domain; that stretch reads KNIRNFSIIA…TIVKNIPSPA (183 aa). Residues 14–19 and 131–134 each bind GTP; these read DHGKST and NKID.

This sequence belongs to the TRAFAC class translation factor GTPase superfamily. Classic translation factor GTPase family. LepA subfamily.

The protein localises to the cell inner membrane. The enzyme catalyses GTP + H2O = GDP + phosphate + H(+). Functionally, required for accurate and efficient protein synthesis under certain stress conditions. May act as a fidelity factor of the translation reaction, by catalyzing a one-codon backward translocation of tRNAs on improperly translocated ribosomes. Back-translocation proceeds from a post-translocation (POST) complex to a pre-translocation (PRE) complex, thus giving elongation factor G a second chance to translocate the tRNAs correctly. Binds to ribosomes in a GTP-dependent manner. In Colwellia psychrerythraea (strain 34H / ATCC BAA-681) (Vibrio psychroerythus), this protein is Elongation factor 4.